A 306-amino-acid chain; its full sequence is D-alanine--D-alanine ligase (306 aa).

The 194-residue stretch at 107 to 300 folds into the ATP-grasp domain; that stretch reads KAAYRTAGLP…FGQLCAWLVE (194 aa). 134–184 lines the ATP pocket; that stretch reads IAPPYVVKPNNEGSSVGIYIVHEATNSPPQLSEEMPAQVMVEAYAPGREMT. Residues Asp-251, Glu-267, and Asn-269 each contribute to the Mg(2+) site.

Belongs to the D-alanine--D-alanine ligase family. The cofactor is Mg(2+). Mn(2+) serves as cofactor.

It localises to the cytoplasm. It carries out the reaction 2 D-alanine + ATP = D-alanyl-D-alanine + ADP + phosphate + H(+). The protein operates within cell wall biogenesis; peptidoglycan biosynthesis. Functionally, cell wall formation. The sequence is that of D-alanine--D-alanine ligase from Ruegeria sp. (strain TM1040) (Silicibacter sp.).